We begin with the raw amino-acid sequence, 1191 residues long: uncharacterized protein (1191 aa).

11 WD repeats span residues 558–588 (GHRD…HLWT), 599–629 (GHTG…KIWD), 640–670 (GHQD…RLWH), 682–712 (GHTK…RLWD), 723–753 (LPEV…RLWT), 764–794 (GHDE…IHWS), 805–835 (GYPE…KVWD), 995–1025 (QRKE…TLWN), 1036–1066 (AHGD…KIWS), 1077–1107 (SDPL…RLWD), and 1118–1148 (STSG…QSWP).

This is an uncharacterized protein from Synechocystis sp. (strain ATCC 27184 / PCC 6803 / Kazusa).